We begin with the raw amino-acid sequence, 157 residues long: AM-toxin biosynthesis protein 15 (157 aa).

Residues 17-43 (RARHWDSKQGSSNSDVASGGSEVAGNS) are disordered.

It participates in mycotoxin biosynthesis. Part of the gene clusters that mediate the biosynthesis of AM-toxins, host-selective toxins (HSTs) causing Alternaria blotch on apple, a worldwide distributed disease. AM-toxins are cyclic depsipeptides containing the 3 residues 2-hydroxy-isovaleric acid (2-HIV), dehydroalanine, L-alanine which are common for all 3 AM-toxins I to III. The fourth precursor is L-alpha-amino-methoxyphenyl-valeric acid (L-Amv) for AM-toxin I, L-alpha-amino-phenyl-valeric acid (L-Apv) for AM-toxin II, and L-alpha-amino-hydroxyphenyl-valeric acid (L-Ahv) for AM-toxin III. AM-toxins have two target sites for affecting susceptible apple cells; they cause invagination of the plasma membrane and electrolyte loss and chloroplast disorganization. The non-ribosomal peptide synthetase AMT1 contains 4 catalytic modules and is responsible for activation of each residue in AM-toxin. The aldo-keto reductase AMT2 catalyzes the conversion of 2-keto-isovaleric acid (2-KIV) to 2-hydroxy-isovaleric acid (2-HIV), one of the precursor residues incorporated by AMT1 during AM-toxin biosynthesis, by reduction of its ketone to an alcohol. The cytochrome P450 monooxygenase AMT3 and the thioesterase AMT4 are also important for AM-toxin production, but their exact function within the AM-toxin biosynthesis are not known yet. Up to 21 proteins (including AMT1 to AMT4) are predicted to be involved in AM-toxin biosynthesis since their expression ishighly up-regulated in AM-toxin-producing cultures. This Alternaria alternata (Alternaria rot fungus) protein is AM-toxin biosynthesis protein 15.